Consider the following 463-residue polypeptide: Senescence/dehydration-associated protein At3g51250 (463 aa).

A compositionally biased stretch (basic and acidic residues) spans methionine 1 to arginine 12. 3 disordered regions span residues methionine 1 to threonine 31, proline 52 to threonine 74, and isoleucine 146 to serine 172. The span at valine 19–threonine 31 shows a compositional bias: polar residues. A Senescence domain is found at isoleucine 269 to alanine 437.

This is Senescence/dehydration-associated protein At3g51250 from Arabidopsis thaliana (Mouse-ear cress).